The following is a 321-amino-acid chain: Small ribosomal subunit protein mS43 (321 aa).

Residues 1-13 (MLRFTGARAIRKY) constitute a mitochondrion transit peptide.

The protein belongs to the mitochondrion-specific ribosomal protein mS43 family. Component of the mitochondrial small ribosomal subunit (mt-SSU). Mature yeast 74S mitochondrial ribosomes consist of a small (37S) and a large (54S) subunit. The 37S small subunit contains a 15S ribosomal RNA (15S mt-rRNA) and 34 different proteins. The 54S large subunit contains a 21S rRNA (21S mt-rRNA) and 46 different proteins. mS43 forms a heterodimer with mS42, building a large protuberance adjacent to the mRNA channel exit in the mt-SSU body.

It is found in the mitochondrion. In terms of biological role, component of the mitochondrial ribosome (mitoribosome), a dedicated translation machinery responsible for the synthesis of mitochondrial genome-encoded proteins, including at least some of the essential transmembrane subunits of the mitochondrial respiratory chain. The mitoribosomes are attached to the mitochondrial inner membrane and translation products are cotranslationally integrated into the membrane. The sequence is that of Small ribosomal subunit protein mS43 (MRP1) from Saccharomyces cerevisiae (strain ATCC 204508 / S288c) (Baker's yeast).